Reading from the N-terminus, the 384-residue chain is Succinyl-diaminopimelate desuccinylase (384 aa).

His-71 contributes to the Zn(2+) binding site. The active site involves Asp-73. Asp-104 lines the Zn(2+) pocket. Catalysis depends on Glu-138, which acts as the Proton acceptor. Glu-139, Glu-167, and His-353 together coordinate Zn(2+).

This sequence belongs to the peptidase M20A family. DapE subfamily. In terms of assembly, homodimer. The cofactor is Zn(2+). Co(2+) is required as a cofactor.

It catalyses the reaction N-succinyl-(2S,6S)-2,6-diaminopimelate + H2O = (2S,6S)-2,6-diaminopimelate + succinate. It functions in the pathway amino-acid biosynthesis; L-lysine biosynthesis via DAP pathway; LL-2,6-diaminopimelate from (S)-tetrahydrodipicolinate (succinylase route): step 3/3. In terms of biological role, catalyzes the hydrolysis of N-succinyl-L,L-diaminopimelic acid (SDAP), forming succinate and LL-2,6-diaminopimelate (DAP), an intermediate involved in the bacterial biosynthesis of lysine and meso-diaminopimelic acid, an essential component of bacterial cell walls. The protein is Succinyl-diaminopimelate desuccinylase of Aromatoleum aromaticum (strain DSM 19018 / LMG 30748 / EbN1) (Azoarcus sp. (strain EbN1)).